Reading from the N-terminus, the 557-residue chain is Organic cation/carnitine transporter 2 (557 aa).

At 1 to 20 the chain is on the cytoplasmic side; sequence MRDYDEVTAFLGEWGPFQRL. A helical transmembrane segment spans residues 21–41; the sequence is IFFLLSASIIPNGFNGMSIVF. The Extracellular segment spans residues 42–142; that stretch reads LAGTPEHRCL…DLVCKDDWKA (101 aa). 3 N-linked (GlcNAc...) asparagine glycosylation sites follow: N57, N64, and N91. Residues 143–163 form a helical membrane-spanning segment; that stretch reads PLTTSLFFVGVLMGSFISGQL. Residues 164–172 are Cytoplasmic-facing; it reads SDRFGRKNV. The helical transmembrane segment at 173 to 193 threads the bilayer; sequence LFLTMGMQTGFSFLQLFSVNF. Topologically, residues 194 to 197 are extracellular; sequence EMFT. The chain crosses the membrane as a helical span at residues 198 to 218; sequence VLFVLVGMGQISNYVAAFVLG. Residue 218-225 coordinates ATP; that stretch reads GTEILSKS. Topologically, residues 219-232 are cytoplasmic; that stretch reads TEILSKSIRIIFAT. The helical transmembrane segment at 233–253 threads the bilayer; sequence LGVCIFYAFGFMVLPLFAYFI. Topologically, residues 254–257 are extracellular; the sequence is RDWR. Residues 258–278 form a helical membrane-spanning segment; the sequence is MLLLALTVPGVLCGALWWFIP. Residues 279-341 are Cytoplasmic-facing; that stretch reads ESPRWLISQG…YDLVRTRNIR (63 aa). A helical membrane pass occupies residues 342–362; sequence IITIMSIILWLTISVGYFGLS. The Extracellular portion of the chain corresponds to 363 to 373; sequence LDTPNLHGDIY. A helical transmembrane segment spans residues 374 to 394; it reads VNCFLLAAVEVPAYVLAWLLL. Topologically, residues 395 to 406 are cytoplasmic; it reads QHLPRRYSISAA. Residues 407–427 traverse the membrane as a helical segment; it reads LFLGGSVLLFIQLVPSELFYL. Topologically, residues 428 to 430 are extracellular; sequence STA. Residues 431–451 traverse the membrane as a helical segment; sequence LVMVGKFGITSAYSMVYVYTA. The Cytoplasmic portion of the chain corresponds to 452-462; the sequence is ELYPTVVRNMG. Residues 463 to 483 traverse the membrane as a helical segment; that stretch reads VGVSSTASRLGSILSPYFVYL. The Extracellular portion of the chain corresponds to 484 to 488; sequence GAYDR. At Y486 the chain carries Phosphotyrosine. The helical transmembrane segment at 489-509 threads the bilayer; sequence FLPYILMGSLTILTAILTLFF. The Cytoplasmic portion of the chain corresponds to 510 to 557; that stretch reads PESFGAPLPDTIDQMLRVKGIKQWQIQSQTRTQKDGGESPTVLKSTAF. Residues 537 to 557 form a disordered region; sequence SQTRTQKDGGESPTVLKSTAF. At S548 the chain carries Phosphoserine. Residue T550 is modified to Phosphothreonine.

It belongs to the major facilitator (TC 2.A.1) superfamily. Organic cation transporter (TC 2.A.1.19) family. Interacts with PDZK1. As to expression, expressed in the proximal and distal tubules and in the glomeruli in the kidney, in the myocardium, valves, and arterioles in the heart, in the labyrinthine layer of the placenta, and in the cortex, hippocampus, and cerebellum in the brain. Expressed in Sertoli cells in testis.

The protein resides in the cell membrane. The protein localises to the apical cell membrane. Its subcellular location is the basal cell membrane. The catalysed reaction is (R)-carnitine(out) + Na(+)(out) = (R)-carnitine(in) + Na(+)(in). It carries out the reaction O-acetyl-(R)-carnitine(out) + Na(+)(out) = O-acetyl-(R)-carnitine(in) + Na(+)(in). It catalyses the reaction O-propanoyl-(R)-carnitine(out) + Na(+)(out) = O-propanoyl-(R)-carnitine(in) + Na(+)(in). The enzyme catalyses glycine betaine(out) + Na(+)(out) = glycine betaine(in) + Na(+)(in). The catalysed reaction is glycine betaine(out) + (R)-carnitine(in) = glycine betaine(in) + (R)-carnitine(out). It carries out the reaction O-butanoyl-(R)-carnitine(out) + Na(+)(out) = O-butanoyl-(R)-carnitine(in) + Na(+)(in). It catalyses the reaction (S)-carnitine(out) + Na(+)(out) = (S)-carnitine(in) + Na(+)(in). The enzyme catalyses an O-acyl-(R)-carnitine(out) + Na(+)(out) = an O-acyl-(R)-carnitine(in) + Na(+)(in). The catalysed reaction is L-glutamyl-L-arginyl-glycyl-L-methionyl-L-threonine(out) + Na(+)(out) = L-glutamyl-L-arginyl-glycyl-L-methionyl-L-threonine(in) + Na(+)(in). It carries out the reaction N,N-dimethylglycine(out) + Na(+)(out) = N,N-dimethylglycine(in) + Na(+)(in). Its activity is regulated as follows. Inhibited by emetine, quinidine and verapamil. The IC(50) of emetine is 4.2 uM. Not inhibited by valproic acid. Transport of (R)-carnitine is stimulated by cholesterol in the plasma membrane. Functionally, sodium-ion dependent, high affinity carnitine transporter. Involved in the active cellular uptake of carnitine. Transports one sodium ion with one molecule of carnitine. Also transports organic cations such as tetraethylammonium (TEA) without the involvement of sodium. Also relative uptake activity ratio of carnitine to TEA is 11.3. May also contribute to regulate the transport of organic compounds in testis across the blood-testis-barrier. This Rattus norvegicus (Rat) protein is Organic cation/carnitine transporter 2 (Slc22a5).